The sequence spans 72 residues: Translation initiation factor IF-1 (72 aa).

Positions 1-72 (MAKEDAIELQ…SKGRIVFRAR (72 aa)) constitute an S1-like domain.

The protein belongs to the IF-1 family. In terms of assembly, component of the 30S ribosomal translation pre-initiation complex which assembles on the 30S ribosome in the order IF-2 and IF-3, IF-1 and N-formylmethionyl-tRNA(fMet); mRNA recruitment can occur at any time during PIC assembly.

The protein resides in the cytoplasm. One of the essential components for the initiation of protein synthesis. Stabilizes the binding of IF-2 and IF-3 on the 30S subunit to which N-formylmethionyl-tRNA(fMet) subsequently binds. Helps modulate mRNA selection, yielding the 30S pre-initiation complex (PIC). Upon addition of the 50S ribosomal subunit IF-1, IF-2 and IF-3 are released leaving the mature 70S translation initiation complex. The protein is Translation initiation factor IF-1 of Aliivibrio fischeri (strain ATCC 700601 / ES114) (Vibrio fischeri).